The following is a 107-amino-acid chain: Small ribosomal subunit protein uS17 (107 aa).

It belongs to the universal ribosomal protein uS17 family. As to quaternary structure, part of the 30S ribosomal subunit.

Functionally, one of the primary rRNA binding proteins, it binds specifically to the 5'-end of 16S ribosomal RNA. The polypeptide is Small ribosomal subunit protein uS17 (Thermotoga petrophila (strain ATCC BAA-488 / DSM 13995 / JCM 10881 / RKU-1)).